Reading from the N-terminus, the 554-residue chain is MDKQNTDSEKRATAEAPPQSLCTLVSSSEQGGMDITNHNAKAGAADEYPHGVRLAAVVFSLMLGMFLVALDNTILGTAIPKITDEFHDLNKVSWYGSAYLMTFGCGFQSTWGKFYKYFPIKVWFLVAVFIFEVGSLICAVAQNPTTLIVGRAIAGFGGSGVGVGIFTIIGFAAPPENRPQLLGFTGATYGIAAVLGPLIGGAFTDKCFYINLPIGGVAAGTIFLLFKPPTSASPAKATPKEKFLQMDLVGATLMMGLIVSYILALQYGGQTHSWKSSEVIGLLVGFFLFVLAFVTWEIYQKERAMIVPRLFMRRYISVGSIYMFFFSGAYFIILYYLPIYFQSVYNSSPIGSGVKMLALIIPLTLAAIVQGWALSKIRIVPLFWIIGGALGTVGCGLFYTFDTETSVGKWVGYQIIVGFSTGWTFQIAMSNAQVHAPPEDMSQATAIVNFFMTVGGAFFISAAQCAFSNQLIKTITKNLPELDPTVAISTGATQIREAFTASQVPIVVDAYMVGLKAVFAITIAAFGVATVIGFFGSWKKLLADELEKATGGVA.

The next 14 helical transmembrane spans lie at 54–74, 93–115, 120–140, 152–172, 181–201, 206–226, 248–268, 279–299, 321–341, 349–369, 379–399, 410–430, 447–467, and 518–538; these read LAAVVFSLMLGMFLVALDNTI, SWYGSAYLMTFGCGFQSTWGKFY, IKVWFLVAVFIFEVGSLICAV, AIAGFGGSGVGVGIFTIIGFA, LLGFTGATYGIAAVLGPLIGG, KCFYINLPIGGVAAGTIFLLF, LVGATLMMGLIVSYILALQYG, VIGLLVGFFLFVLAFVTWEIY, IYMFFFSGAYFIILYYLPIYF, PIGSGVKMLALIIPLTLAAIV, IVPLFWIIGGALGTVGCGLFY, WVGYQIIVGFSTGWTFQIAMS, IVNFFMTVGGAFFISAAQCAF, and VFAITIAAFGVATVIGFFGSW.

Belongs to the major facilitator superfamily.

Its subcellular location is the membrane. Functionally, probable efflux pump; part of the gene cluster that mediates the biosynthesis of griseofulvin. The protein is Probable efflux pump gsfJ of Penicillium aethiopicum.